The following is an 846-amino-acid chain: Circadian locomoter output cycles protein kaput (846 aa).

The short motif at 32–47 (DKAKRVSRNKSEKKRR) is the Nuclear localization signal element. Residues 34–84 (AKRVSRNKSEKKRRDQFNVLIKELGSMLPGNARKMDKSTVLQKSIDFLRKH) form the bHLH domain. Phosphoserine is present on residues serine 38 and serine 42. A Glycyl lysine isopeptide (Lys-Gly) (interchain with G-Cter in SUMO1) cross-link involves residue lysine 67. PAS domains follow at residues 107-177 (NEEF…LLES) and 262-332 (FIKE…MQYG). The PAC domain maps to 336–379 (SCYYRFLTKGQQWIWLQTHYYITYHQWNSRPEFIVCTHTVVSYA). The interval 371–845 (CTHTVVSYAE…SLPDPSKVQP (475 aa)) is interaction with NR3C1. Disordered stretches follow at residues 392 to 411 (EESL…SDNR) and 420 to 495 (ALER…SSLT). The residue at position 408 (serine 408) is a Phosphoserine. Position 427 is a phosphoserine; by GSK3-beta (serine 427). Serine 431 carries the phosphoserine modification. The span at 447–463 (DPSSTPTKIPTDTSTPP) shows a compositional bias: polar residues. The interval 450–570 (STPTKIPTDT…QGLQMFLQQS (121 aa)) is interaction with SIRT1. Phosphothreonine; by CDK5 occurs at positions 451 and 461. Residues 478–493 (SSFSSQSINSQSVGSS) show a composition bias toward low complexity. The implicated in the circadian rhythmicity stretch occupies residues 514–564 (FQFSAQLGAMQHLKDQLEQRTRMIEANIHRQQEELRKIQEQLQMVHGQGLQ). Composition is skewed to low complexity over residues 624-637 (QQQT…QSQQ) and 644-654 (SQQTSLPSQTQ). 3 disordered regions span residues 624–654 (QQQT…SQTQ), 764–783 (EQQL…QPPQ), and 811–846 (STFP…VQPQ). The span at 811 to 829 (STFPQSHHQQHQSQQQQQL) shows a compositional bias: low complexity. Lysine 842 participates in a covalent cross-link: Glycyl lysine isopeptide (Lys-Gly) (interchain with G-Cter in SUMO1).

In terms of assembly, component of the circadian clock oscillator which includes the CRY proteins, CLOCK or NPAS2, BMAL1 or BMAL2, CSNK1D and/or CSNK1E, TIMELESS and the PER proteins. Interacts with KMT2A; in a circadian manner. Forms a heterodimer with BMAL1. The CLOCK-BMAL1 heterodimer is required for E-box-dependent transactivation, for CLOCK nuclear translocation and degradation, and for phosphorylation of both CLOCK and BMAL1. Interacts with NR3C1 in a ligand-dependent fashion. Interacts with ESR1 and estrogen stimulates this interaction. Interacts with the complex p35/CDK5. Interacts with RELA/p65. Interacts with KAT2B, CREBBP, EP300. Interacts with ID1 and ID3. Interacts with ID2. Interacts with MTA1. Interacts with OGA. Interacts with SIRT1. Interacts with CIPC. Interacts with EZH2. Interacts with EIF4E, PIWIL1 and DDX4. Interacts with PER2 and CRY1 and the interaction with PER and CRY proteins requires translocation to the nucleus. Interacts with PER1 and CRY2. Interaction of the CLOCK-BMAL1 heterodimer with PER or CRY inhibits transcription activation. Interaction of the CLOCK-BMAL1 with CRY1 is independent of DNA but with PER2 is off DNA. The CLOCK-BMAL1 heterodimer interacts with GSK3B. Interacts with KDM5A. Interacts with MYBBP1A. Interacts with THRAP3. Interacts with MED1; this interaction requires the presence of THRAP3. Interacts with NCOA2. The CLOCK-BMAL1 heterodimer interacts with PASD1. Interacts with ASS1 and IMPDH2; in a circadian manner. Interacts with NDUFA9. Interacts with PIWIL2 (via PIWI domain). Interacts with HNF4A. Ubiquitinated, leading to its proteasomal degradation. Post-translationally, O-glycosylated; contains O-GlcNAc. O-glycosylation by OGT prevents protein degradation by inhibiting ubiquitination. It also stabilizes the CLOCK-BMAL1 heterodimer thereby increasing CLOCK-BMAL1-mediated transcriptional activation of PER1/2/3 and CRY1/2. In terms of processing, phosphorylation is dependent on the CLOCK-BMAL1 heterodimer formation. Phosphorylation enhances the transcriptional activity, alters the subcellular localization and decreases the stability of the heterodimer by promoting its degradation. Phosphorylation shows circadian variations in the liver. May be phosphorylated by CSNK1D and CKSN1E. Sumoylation enhances its transcriptional activity and interaction with ESR1, resulting in up-regulation of ESR1 activity. Estrogen stimulates sumoylation. Desumoylation by SENP1 negatively regulates its transcriptional activity. Sumoylation stimulates cell proliferation and increases the proportion of S phase cells in breast cancer cell lines. Post-translationally, undergoes lysosome-mediated degradation in a time-dependent manner in the liver. In terms of tissue distribution, hair follicles (at protein level). Expressed in all tissues examined including spleen, thymus, prostate, testis, ovary, small intestine, colon, leukocytes, heart, brain, placenta, lung, liver, skeletal muscle, kidney and pancreas. Highest levels in testis and skeletal muscle. Low levels in thymus, lung and liver. Expressed in all brain regions with highest levels in cerebellum. Highly expressed in the suprachiasmatic nucleus (SCN).

The protein resides in the nucleus. The protein localises to the cytoplasm. Its subcellular location is the cytosol. It catalyses the reaction L-lysyl-[protein] + acetyl-CoA = N(6)-acetyl-L-lysyl-[protein] + CoA + H(+). With respect to regulation, there is conflicting data about the effect of NAD cofactors on activity. PubMed:11441146 suggests that the redox state of the cell can modulate the transcriptional activity of the CLOCK-BMAL1 heterodimer; NADH and NADPH enhance the DNA-binding activity of the heterodimer. PubMed:23229515 reports that NADH and NADPH have no significant effect on DNA-binding activity of the CLOCK-BMAL1 heterodimer. Functionally, transcriptional activator which forms a core component of the circadian clock. The circadian clock, an internal time-keeping system, regulates various physiological processes through the generation of approximately 24 hour circadian rhythms in gene expression, which are translated into rhythms in metabolism and behavior. It is derived from the Latin roots 'circa' (about) and 'diem' (day) and acts as an important regulator of a wide array of physiological functions including metabolism, sleep, body temperature, blood pressure, endocrine, immune, cardiovascular, and renal function. Consists of two major components: the central clock, residing in the suprachiasmatic nucleus (SCN) of the brain, and the peripheral clocks that are present in nearly every tissue and organ system. Both the central and peripheral clocks can be reset by environmental cues, also known as Zeitgebers (German for 'timegivers'). The predominant Zeitgeber for the central clock is light, which is sensed by retina and signals directly to the SCN. The central clock entrains the peripheral clocks through neuronal and hormonal signals, body temperature and feeding-related cues, aligning all clocks with the external light/dark cycle. Circadian rhythms allow an organism to achieve temporal homeostasis with its environment at the molecular level by regulating gene expression to create a peak of protein expression once every 24 hours to control when a particular physiological process is most active with respect to the solar day. Transcription and translation of core clock components (CLOCK, NPAS2, BMAL1, BMAL2, PER1, PER2, PER3, CRY1 and CRY2) plays a critical role in rhythm generation, whereas delays imposed by post-translational modifications (PTMs) are important for determining the period (tau) of the rhythms (tau refers to the period of a rhythm and is the length, in time, of one complete cycle). A diurnal rhythm is synchronized with the day/night cycle, while the ultradian and infradian rhythms have a period shorter and longer than 24 hours, respectively. Disruptions in the circadian rhythms contribute to the pathology of cardiovascular diseases, cancer, metabolic syndromes and aging. A transcription/translation feedback loop (TTFL) forms the core of the molecular circadian clock mechanism. Transcription factors, CLOCK or NPAS2 and BMAL1 or BMAL2, form the positive limb of the feedback loop, act in the form of a heterodimer and activate the transcription of core clock genes and clock-controlled genes (involved in key metabolic processes), harboring E-box elements (5'-CACGTG-3') within their promoters. The core clock genes: PER1/2/3 and CRY1/2 which are transcriptional repressors form the negative limb of the feedback loop and interact with the CLOCK|NPAS2-BMAL1|BMAL2 heterodimer inhibiting its activity and thereby negatively regulating their own expression. This heterodimer also activates nuclear receptors NR1D1/2 and RORA/B/G, which form a second feedback loop and which activate and repress BMAL1 transcription, respectively. Regulates the circadian expression of ICAM1, VCAM1, CCL2, THPO and MPL and also acts as an enhancer of the transactivation potential of NF-kappaB. Plays an important role in the homeostatic regulation of sleep. The CLOCK-BMAL1 heterodimer regulates the circadian expression of SERPINE1/PAI1, VWF, B3, CCRN4L/NOC, NAMPT, DBP, MYOD1, PPARGC1A, PPARGC1B, SIRT1, GYS2, F7, NGFR, GNRHR, BHLHE40/DEC1, ATF4, MTA1, KLF10 and also genes implicated in glucose and lipid metabolism. Promotes rhythmic chromatin opening, regulating the DNA accessibility of other transcription factors. The CLOCK-BMAL2 heterodimer activates the transcription of SERPINE1/PAI1 and BHLHE40/DEC1. The preferred binding motif for the CLOCK-BMAL1 heterodimer is 5'-CACGTGA-3', which contains a flanking adenine nucleotide at the 3-prime end of the canonical 6-nucleotide E-box sequence. CLOCK specifically binds to the half-site 5'-CAC-3', while BMAL1 binds to the half-site 5'-GTGA-3'. The CLOCK-BMAL1 heterodimer also recognizes the non-canonical E-box motifs 5'-AACGTGA-3' and 5'-CATGTGA-3'. CLOCK has an intrinsic acetyltransferase activity, which enables circadian chromatin remodeling by acetylating histones and nonhistone proteins, including its own partner BMAL1. Represses glucocorticoid receptor NR3C1/GR-induced transcriptional activity by reducing the association of NR3C1/GR to glucocorticoid response elements (GREs) via the acetylation of multiple lysine residues located in its hinge region. The acetyltransferase activity of CLOCK is as important as its transcription activity in circadian control. Acetylates metabolic enzymes IMPDH2 and NDUFA9 in a circadian manner. Facilitated by BMAL1, rhythmically interacts and acetylates argininosuccinate synthase 1 (ASS1) leading to enzymatic inhibition of ASS1 as well as the circadian oscillation of arginine biosynthesis and subsequent ureagenesis. Drives the circadian rhythm of blood pressure through transcriptional activation of ATP1B1. This is Circadian locomoter output cycles protein kaput (CLOCK) from Homo sapiens (Human).